The chain runs to 823 residues: MEGAGGANDKKKISSERRKEKSRDAARSRRSKESEVFYELAHQLPLPHNVSSHLDKASVMRLTISYLRVRKLLDAGDLDIEDEMKAQMNCFYLKALDGFVMVLTDDGDMIYISDNVNKYMGLTQFELTGHSVFDFTHPCDHEEMREMLTHRNGLVKKGKEQNTQRSFFLRMKCTLTSRGRTMNIKSATWKVLHCTGHIHVYDTNSNQSQCGYKKPPMTCLVLICEPIPHPSNIEIPLDSKTFLSRHSLDMKFSYCDERITELMGYEPEELLGRSIYEYYHALDSDHLTKTHHDMFTKGQVTTGQYRMLAKRGGYVWIETQATVIYNTKNSQPQCIVCVNYVVSGIIQHDLIFSLQQTECVLKPVESSDMKMTQLFTKVESEDTSSLFDKLKKEPDALTLLAPAAGDTIISLDFGSNDTETDDQQLEEVPLYNDVMLPSSNEKLQNINLAMSPLPASETPKPLRSSADPALNQEVALKLEPNPESLELSFTMPQIQDQPASPSDGSTRQSSPEPNSPSEYCFDVDSDMVNEFKLELVEKLFAEDTEAKNPFSTQDTDLDLEMLAPYIPMDDDFQLRSFDQLSPLENSSTSPQSASTNTVFQPTQMQKPPIATVTTTATSDELKTVTKDGMEDIKILIAFPSPPHVPKEPPCATTSPYSDTGSRTASPNRAGKGVIEQTEKSHPRSPNVLSVALSQRTTAPEEELNPKILALQNAQRKRKIEHDGSLFQAVGIGTLLQQPDDRATTTSLSWKRVKGCKSSEQNGMEQKTIILIPSDLACRLLGQSMDESGLPQLTSYDCEVNAPIQGSRNLLQGEELLRALDQVN.

The tract at residues Met1 to Arg30 is disordered. Residues Met1 to Ala401 form an interaction with TSGA10 region. Positions Asn8–Arg30 are enriched in basic and acidic residues. The region spanning Arg17–Arg70 is the bHLH domain. Residues Lys21–Arg30 are DNA-binding. One can recognise a PAS 1 domain in the interval Lys85–Gly158. The interval Arg170–Val191 is required for heterodimer formation with ARNT. Residues Pro228–Gly298 enclose the PAS 2 domain. Residue Ser247 is modified to Phosphoserine; by CK1. Residues Thr302–Ile345 form the PAC domain. Residues Ala401–Gln600 are ODD. Position 402 is a 4-hydroxyproline (Pro402). The span at Ile494 to Ser517 shows a compositional bias: polar residues. The segment at Ile494–Phe521 is disordered. Residues Phe531–Arg575 are NTAD. Position 532 is an N6-acetyllysine; alternate (Lys532). Lys532 participates in a covalent cross-link: Glycyl lysine isopeptide (Lys-Gly) (interchain with G-Cter in ubiquitin); alternate. Residues Lys538 and Lys547 each participate in a glycyl lysine isopeptide (Lys-Gly) (interchain with G-Cter in ubiquitin) cross-link. Position 551 is a phosphoserine; by GSK3-beta (Ser551). At Thr555 the chain carries Phosphothreonine; by GSK3-beta. Pro564 is subject to 4-hydroxyproline. The residue at position 576 (Ser576) is a Phosphoserine; by PLK3. The tract at residues Ser576–Gln782 is ID. Disordered stretches follow at residues Ser581–Thr602 and Pro639–Pro685. Ser589 is subject to Phosphoserine; by GSK3-beta. A compositionally biased stretch (polar residues) spans Ala651–Pro666. Position 654 is a phosphoserine; by PLK3 (Ser654). Lys706 is subject to N6-acetyllysine. The Nuclear localization signal motif lies at Arg715 to His721. Residues Ser783–Asn823 are CTAD. At Cys797 the chain carries S-nitrosocysteine. Asn800 is modified ((3S)-3-hydroxyasparagine).

As to quaternary structure, interacts with the ARNT; forms a heterodimer that binds core DNA sequence 5'-TACGTG-3' within the hypoxia response element (HRE) of target gene promoters. Interacts with COPS5; the interaction increases the transcriptional activity of HIF1A through increased stability. Interacts with EP300 (via TAZ-type 1 domains); the interaction is stimulated in response to hypoxia and inhibited by CITED2. Interacts with CREBBP (via TAZ-type 1 domains). Interacts with NCOA1, NCOA2, APEX1 and HSP90. Interacts (hydroxylated within the ODD domain) with VHLL (via beta domain); the interaction, leads to polyubiquitination and subsequent HIF1A proteasomal degradation. During hypoxia, sumoylated HIF1A also binds VHL; the interaction promotes the ubiquitination of HIF1A. Interacts with SENP1; the interaction desumoylates HIF1A resulting in stabilization and activation of transcription. Interacts (via the ODD domain) with NAA10; the interaction appears not to acetylate HIF1A nor have any affect on protein stability, during hypoxia. Interacts with RWDD3; the interaction enhances HIF1A sumoylation. Interacts with TSGA10. Interacts with HIF3A. Interacts with RORA (via the DNA binding domain); the interaction enhances HIF1A transcription under hypoxia through increasing protein stability. Interaction with PSMA7 inhibits the transactivation activity of HIF1A under both normoxic and hypoxia-mimicking conditions. Interacts with USP20. Interacts with RACK1; promotes HIF1A ubiquitination and proteasome-mediated degradation. Interacts (via N-terminus) with USP19. Interacts with SIRT2. Interacts (deacetylated form) with EGLN1. Interacts with CBFA2T3. Interacts with HSP90AA1 and HSP90AB1. Interacts with DCUN1D1; this interaction increases the interaction between VHL and DCUN1D1. Interacts with HIF1AN. In terms of processing, S-nitrosylation of Cys-797 may be responsible for increased recruitment of p300 coactivator necessary for transcriptional activity of HIF-1 complex. Post-translationally, acetylation of Lys-532 by ARD1 increases interaction with VHL and stimulates subsequent proteasomal degradation. Deacetylation of Lys-706 by SIRT2 increases its interaction with and hydroxylation by EGLN1 thereby inactivating HIF1A activity by inducing its proteasomal degradation. Ubiquitinated; in normoxia, following hydroxylation and interaction with VHL. Lys-532 appears to be the principal site of ubiquitination. Clioquinol, the Cu/Zn-chelator, inhibits ubiquitination through preventing hydroxylation at Asn-800. Ubiquitinated by E3 ligase VHL. Deubiquitinated by UCHL1. In terms of processing, requires phosphorylation for DNA-binding. Phosphorylation at Ser-247 by CSNK1D/CK1 represses kinase activity and impairs ARNT binding. Phosphorylation by GSK3-beta and PLK3 promote degradation by the proteasome. Post-translationally, the iron and 2-oxoglutarate dependent 3-hydroxylation of asparagine is (S) stereospecific within HIF CTAD domains. Sumoylated; with SUMO1 under hypoxia. Sumoylation is enhanced through interaction with RWDD3. Both sumoylation and desumoylation seem to be involved in the regulation of its stability during hypoxia. Sumoylation can promote either its stabilization or its VHL-dependent degradation by promoting hydroxyproline-independent HIF1A-VHL complex binding, thus leading to HIF1A ubiquitination and proteasomal degradation. Desumoylation by SENP1 increases its stability amd transcriptional activity. There is a disaccord between various publications on the effect of sumoylation and desumoylation on its stability and transcriptional activity. In terms of processing, in normoxia, is hydroxylated on Pro-402 and Pro-564 in the oxygen-dependent degradation domain (ODD) by EGLN1/PHD2 and EGLN2/PHD1. EGLN3/PHD3 has also been shown to hydroxylate Pro-564. The hydroxylated prolines promote interaction with VHL, initiating rapid ubiquitination and subsequent proteasomal degradation. Deubiquitinated by USP20. Under hypoxia, proline hydroxylation is impaired and ubiquitination is attenuated, resulting in stabilization. In normoxia, is hydroxylated on Asn-800 by HIF1AN, thus abrogating interaction with CREBBP and EP300 and preventing transcriptional activation. Repressed by iron ion, via Fe(2+) prolyl hydroxylase (PHD) enzymes-mediated hydroxylation and subsequent proteasomal degradation.

The protein localises to the cytoplasm. Its subcellular location is the nucleus. Induced by reactive oxygen species (ROS). Functions as a master transcriptional regulator of the adaptive response to hypoxia. Under hypoxic conditions, activates the transcription of over 40 genes, including erythropoietin, glucose transporters, glycolytic enzymes, vascular endothelial growth factor, HILPDA, and other genes whose protein products increase oxygen delivery or facilitate metabolic adaptation to hypoxia. Plays an essential role in embryonic vascularization, tumor angiogenesis and pathophysiology of ischemic disease. Heterodimerizes with ARNT; heterodimer binds to core DNA sequence 5'-TACGTG-3' within the hypoxia response element (HRE) of target gene promoters. Activation requires recruitment of transcriptional coactivators such as CREBBP and EP300. Activity is enhanced by interaction with NCOA1 and/or NCOA2. Interaction with redox regulatory protein APEX1 seems to activate CTAD and potentiates activation by NCOA1 and CREBBP. Involved in the axonal distribution and transport of mitochondria in neurons during hypoxia. The sequence is that of Hypoxia-inducible factor 1-alpha (HIF1A) from Bos taurus (Bovine).